A 97-amino-acid chain; its full sequence is Protein transport protein SFT1 (97 aa).

The Cytoplasmic segment spans residues 1-74 (MSNSRYSQTE…RLTRSLKAGN (74 aa)). Residues 7 to 69 (SQTESNNDRK…KNSSSRLTRS (63 aa)) enclose the t-SNARE coiled-coil homology domain. The helical; Anchor for type IV membrane protein transmembrane segment at 75-94 (SIWRMVGLALLIFFILYTLF) threads the bilayer. Topologically, residues 95–97 (KLF) are lumenal.

As to quaternary structure, component of a SNARE complex consisting of SED5, GOS1, YKT6 and SFT1.

It localises to the golgi apparatus membrane. In terms of biological role, vesicle SNARE required for retrograde transport within the Golgi complex. The chain is Protein transport protein SFT1 (SFT1) from Saccharomyces cerevisiae (strain ATCC 204508 / S288c) (Baker's yeast).